A 474-amino-acid polypeptide reads, in one-letter code: Bifunctional protein HldE (474 aa).

The ribokinase stretch occupies residues 1–317 (MKLSMPRFDQ…RRAIQRSEGS (317 aa)). 194–197 (NLSE) provides a ligand contact to ATP. Asp263 is a catalytic residue. Positions 343–474 (FTNGCFDILH…AIVEKIRNNE (132 aa)) are cytidylyltransferase.

In the N-terminal section; belongs to the carbohydrate kinase PfkB family. The protein in the C-terminal section; belongs to the cytidylyltransferase family. Homodimer.

The catalysed reaction is D-glycero-beta-D-manno-heptose 7-phosphate + ATP = D-glycero-beta-D-manno-heptose 1,7-bisphosphate + ADP + H(+). The enzyme catalyses D-glycero-beta-D-manno-heptose 1-phosphate + ATP + H(+) = ADP-D-glycero-beta-D-manno-heptose + diphosphate. The protein operates within nucleotide-sugar biosynthesis; ADP-L-glycero-beta-D-manno-heptose biosynthesis; ADP-L-glycero-beta-D-manno-heptose from D-glycero-beta-D-manno-heptose 7-phosphate: step 1/4. It participates in nucleotide-sugar biosynthesis; ADP-L-glycero-beta-D-manno-heptose biosynthesis; ADP-L-glycero-beta-D-manno-heptose from D-glycero-beta-D-manno-heptose 7-phosphate: step 3/4. Its function is as follows. Catalyzes the phosphorylation of D-glycero-D-manno-heptose 7-phosphate at the C-1 position to selectively form D-glycero-beta-D-manno-heptose-1,7-bisphosphate. Functionally, catalyzes the ADP transfer from ATP to D-glycero-beta-D-manno-heptose 1-phosphate, yielding ADP-D-glycero-beta-D-manno-heptose. The chain is Bifunctional protein HldE from Pseudomonas fluorescens (strain SBW25).